Reading from the N-terminus, the 554-residue chain is Probable phospholipase D F09G2.8 (554 aa).

Over 1 to 123 (MPLRLINFRQ…GNSRNRIIKP (123 aa)) the chain is Cytoplasmic. Residues 124–144 (ACVPISIVSLFIIALVFLPLF) form a helical; Signal-anchor for type II membrane protein membrane-spanning segment. Topologically, residues 145 to 554 (NEEDLASPIK…DWNSEYSKDL (410 aa)) are extracellular. Asn181, Asn208, Asn244, and Asn266 each carry an N-linked (GlcNAc...) asparagine glycan. The 28-residue stretch at 272–299 (GSGIIHTKFILSDIATLYIGSANMDWKS) folds into the PLD phosphodiesterase 1 domain. Active-site residues include His277, Lys279, and Asp284. Residues Asn333, Asn350, Asn468, and Asn513 are each glycosylated (N-linked (GlcNAc...) asparagine). Positions 492-518 (FTRVNHAKYMVTEDIAYIGTSNWSGDY) constitute a PLD phosphodiesterase 2 domain.

The protein belongs to the phospholipase D family.

It is found in the membrane. It catalyses the reaction a 1,2-diacyl-sn-glycero-3-phosphocholine + H2O = a 1,2-diacyl-sn-glycero-3-phosphate + choline + H(+). This Caenorhabditis elegans protein is Probable phospholipase D F09G2.8.